The sequence spans 362 residues: Histidinol-phosphate aminotransferase (362 aa).

Lys-218 is modified (N6-(pyridoxal phosphate)lysine).

Belongs to the class-II pyridoxal-phosphate-dependent aminotransferase family. Histidinol-phosphate aminotransferase subfamily. Homodimer. Pyridoxal 5'-phosphate serves as cofactor.

The catalysed reaction is L-histidinol phosphate + 2-oxoglutarate = 3-(imidazol-4-yl)-2-oxopropyl phosphate + L-glutamate. It participates in amino-acid biosynthesis; L-histidine biosynthesis; L-histidine from 5-phospho-alpha-D-ribose 1-diphosphate: step 7/9. The protein is Histidinol-phosphate aminotransferase of Xanthomonas campestris pv. campestris (strain ATCC 33913 / DSM 3586 / NCPPB 528 / LMG 568 / P 25).